The chain runs to 354 residues: Methylthioribose-1-phosphate isomerase (354 aa).

Substrate contacts are provided by residues 48–50 (RGA), R95, and Q202. Residue D243 is the Proton donor of the active site. Substrate is bound at residue 253 to 254 (NK).

Belongs to the eIF-2B alpha/beta/delta subunits family. MtnA subfamily.

It carries out the reaction 5-(methylsulfanyl)-alpha-D-ribose 1-phosphate = 5-(methylsulfanyl)-D-ribulose 1-phosphate. It participates in amino-acid biosynthesis; L-methionine biosynthesis via salvage pathway; L-methionine from S-methyl-5-thio-alpha-D-ribose 1-phosphate: step 1/6. Catalyzes the interconversion of methylthioribose-1-phosphate (MTR-1-P) into methylthioribulose-1-phosphate (MTRu-1-P). This is Methylthioribose-1-phosphate isomerase from Roseiflexus castenholzii (strain DSM 13941 / HLO8).